The sequence spans 375 residues: Carboxypeptidase O (375 aa).

The signal sequence occupies residues 1 to 20 (MKPLLGTFYLLGMLVPGWLG). One can recognise a Peptidase M14 domain in the interval 50–345 (RYHPMGEIYQ…EAVLSVLDDV (296 aa)). 2 residues coordinate Zn(2+): H109 and E112. Residue N175 is glycosylated (N-linked (GlcNAc...) asparagine). Residue H237 participates in Zn(2+) binding. The N-linked (GlcNAc...) asparagine glycan is linked to N252. E311 (proton donor/acceptor) is an active-site residue. N315 is a glycosylation site (N-linked (GlcNAc...) asparagine). S354 is lipidated: GPI-anchor amidated serine. A propeptide spans 355–375 (ARKAKSTALVLGLLMSFMSLL) (removed in mature form).

It belongs to the peptidase M14 family. It depends on Zn(2+) as a cofactor.

It localises to the apical cell membrane. In terms of biological role, carboxypeptidase which preferentially cleaves C-terminal acidic residues from peptides and proteins. Can also cleave C-terminal hydrophobic amino acids, with a preference for small residues over large residues. In Bos taurus (Bovine), this protein is Carboxypeptidase O.